Here is a 1104-residue protein sequence, read N- to C-terminus: Extended synaptotagmin-1 (1104 aa).

At Met1 the chain carries N-acetylmethionine. Residues 1-38 (MERSPGEGPSPSPTDQPSAPSDPTGQPPAAHAKPDPGS) lie on the Cytoplasmic side of the membrane. The segment at 1-47 (MERSPGEGPSPSPTDQPSAPSDPTGQPPAAHAKPDPGSGGQPAGPGA) is disordered. Polar residues predominate over residues 15–24 (DQPSAPSDPT). Over residues 37-47 (GSGGQPAGPGA) the composition is skewed to gly residues. A helical transmembrane segment spans residues 39-59 (GGQPAGPGAAGEALAVLTSFG). The Lumenal portion of the chain corresponds to 60–62 (KRL). A helical membrane pass occupies residues 63–83 (LVLIPVYLAGAVGLSVGFVLF). The Cytoplasmic segment spans residues 84–1104 (GLALYLGWRR…LMDDKDKGSS (1021 aa)). The stretch at 91–116 (WRRVRDEKERSLRAARQLLDDEEQLT) forms a coiled coil. The 179-residue stretch at 135–313 (DVEKAEWLNK…LPNRLLVPLV (179 aa)) folds into the SMP-LTD domain. C2 domains follow at residues 312–433 (LVPD…DDWF), 460–580 (QVLQ…QLSS), 627–751 (SVDA…DEWL), and 777–899 (LEEV…TLNS). Ser324 is subject to Phosphoserine; by CDK5. Residues Lys344, Asp345, Asp357, Asp404, Asp406, Asp408, Asp410, and Asp411 each coordinate Ca(2+). Disordered regions lie at residues 617 to 641 (VDSE…TPDS), 813 to 833 (RKGT…TSHK), and 924 to 950 (SHSY…VTSS). N6-acetyllysine is present on Lys817. 2 positions are modified to phosphoserine: Ser820 and Ser941. Residues 925 to 946 (HSYSHSSSSLSEEPELSGGPPH) show a composition bias toward low complexity. Residue Thr948 is modified to Phosphothreonine. Residues Ser949 and Ser963 each carry the phosphoserine modification. In terms of domain architecture, C2 5 spans 971–1093 (PLGQVKLTVW…DLSQGVARWY (123 aa)). A Phosphotyrosine modification is found at Tyr1009. The interval 1018 to 1025 (KNRGTKRK) is required for phosphatidylinositol 4,5-bisphosphate-dependent location at the cell membrane. At Ser1034 the chain carries Phosphoserine.

This sequence belongs to the extended synaptotagmin family. As to quaternary structure, interacts with ESYT2 and ESYT3. Interacts with ADGRD1; inhibiting the G-protein-coupled receptor activity of ADGRD1. Interaction with ADGRD1 is abolished when cytosolic calcium increases, relieving ADGRD1 G-protein-coupled receptor activity. Interacts (phosphorylated form) with SLC2A4. In terms of processing, phosphorylated on Ser residues in insulin-treated adipocytes (in vitro); this promotes interaction with SLC2A4.

Its subcellular location is the endoplasmic reticulum membrane. It localises to the cell membrane. Its function is as follows. Binds calcium (via the C2 domains) and translocates to sites of contact between the endoplasmic reticulum and the cell membrane in response to increased cytosolic calcium levels. Helps tether the endoplasmic reticulum to the cell membrane and promotes the formation of appositions between the endoplasmic reticulum and the cell membrane. Acts as an inhibitor of ADGRD1 G-protein-coupled receptor activity in absence of cytosolic calcium. Binds glycerophospholipids in a barrel-like domain and may play a role in cellular lipid transport. The sequence is that of Extended synaptotagmin-1 (ESYT1) from Pongo abelii (Sumatran orangutan).